Here is a 690-residue protein sequence, read N- to C-terminus: Ras guanyl-releasing protein 3 (690 aa).

One can recognise an N-terminal Ras-GEF domain in the interval 3 to 125; it reads SSGLGKAATL…SLIDISSIPS (123 aa). The Ras-GEF domain occupies 152–383; that stretch reads EPIELAEHLT…YKLSLVLEPR (232 aa). EF-hand domains follow at residues 420–455 and 458–484; these read HIRKLVESVFRNYDHDHDGYISQEDFESIAANFPFL and FCVLDKDQDGLISKDEMMAYFLRAKSQ. Asp-433, Asp-435, Asp-437, Tyr-439, Asp-444, Asp-462, Asp-464, Asp-466, and Glu-473 together coordinate Ca(2+). Residues 494 to 544 form a Phorbol-ester/DAG-type zinc finger; the sequence is IHNFQEMTYLKPTFCEHCAGFLWGIIKQGYKCKDCGANCHKQCKDLLVLAC. The tract at residues 667 to 690 is disordered; sequence VDRGTEFELDQDEGEETRQDGEDG.

It belongs to the RASGRP family.

Its function is as follows. Guanine nucleotide exchange factor (GEF) for Ras and Rap1. The sequence is that of Ras guanyl-releasing protein 3 (RASGRP3) from Homo sapiens (Human).